We begin with the raw amino-acid sequence, 430 residues long: Evolutionarily conserved signaling intermediate in Toll pathway, mitochondrial (430 aa).

A mitochondrion-targeting transit peptide spans methionine 1–histidine 48. A disordered region spans residues leucine 41 to threonine 66. The segment covering proline 47–serine 56 has biased composition (polar residues). Lysine 372 is covalently cross-linked (Glycyl lysine isopeptide (Lys-Gly) (interchain with G-Cter in ubiquitin)). A disordered region spans residues leucine 400 to serine 430. The segment covering proline 411–aspartate 420 has biased composition (acidic residues).

It belongs to the ECSIT family. Interacts with MAP3K1, SMAD4 and TRAF6. Interacts with SMAD1 only after BMP4-treatment. Part of the mitochondrial complex I assembly/MCIA complex that comprises at least the core subunits TMEM126B, NDUFAF1, ECSIT and ACAD9 and complement subunits such as COA1 and TMEM186. Interacts with NDUFAF1. Interacts with ACAD9. Interacts with TRIM59. Interacts with TMEM70 and TMEM242. Interacts (when ubiquitinated) with NF-kappa-B subunits RELA and NFKB1. Interacts with RIGI, IFIT1 and MAVS; these interactions promote RLR-mediated type I IFN induction. Interacts with SQSTM1; this interaction inhibits TLR4 signaling via functional regulation of the TRAF6-ECSIT complex. Interacts with cereblon/CRBN; this interaction inhibits the ubiquitination of ECSIT. Ubiquitinated on Lys-372; leading to translocation in the nucleus together with RELA and NFKB1 and expression of NF-kappa-B-dependent genes.

It is found in the cytoplasm. The protein localises to the nucleus. The protein resides in the mitochondrion. Its function is as follows. Adapter protein that plays a role in different signaling pathways including TLRs and IL-1 pathways or innate antiviral induction signaling. Plays a role in the activation of NF-kappa-B by forming a signal complex with TRAF6 and TAK1/MAP3K7 to activate TAK1/MAP3K7 leading to activation of IKKs. Once ubiquitinated, interacts with the dissociated RELA and NFKB1 proteins and translocates to the nucleus where it induces NF-kappa-B-dependent gene expression. Plays a role in innate antiviral immune response by bridging the pattern recognition receptors RIGI and MDA5/IFIT1 to the MAVS complex at the mitochondrion. Promotes proteolytic activation of MAP3K1. Involved in the BMP signaling pathway. Required for normal embryonic development. As part of the MCIA complex, involved in the assembly of the mitochondrial complex I. The sequence is that of Evolutionarily conserved signaling intermediate in Toll pathway, mitochondrial from Macaca fascicularis (Crab-eating macaque).